The primary structure comprises 701 residues: DUF724 domain-containing protein 6 (701 aa).

Disordered stretches follow at residues 299–353 (MKTK…KRAN) and 374–452 (VEPV…DESC). The segment covering 326–340 (LNLEKSAETLTKAES) has biased composition (basic and acidic residues). The segment covering 381–399 (RVRTATPLKQTKADTQGKS) has biased composition (polar residues). Composition is skewed to basic and acidic residues over residues 403–412 (KTLEPMRDEN), 421–430 (KVLEEKNSEK), and 437–449 (RQEE…KETD). One can recognise a DUF724 domain in the interval 514-700 (LPFAKKSPFW…LEFQSTASAP (187 aa)). Residues 626–670 (LEKKIEAGEIEGHTYEEEMAELELKILELKRQQVVAKEMKEATDK) adopt a coiled-coil conformation.

As to expression, expressed in roots, stems and flowers.

The protein resides in the nucleus. Functionally, may be involved in the polar growth of plant cells via transportation of RNAs. The chain is DUF724 domain-containing protein 6 from Arabidopsis thaliana (Mouse-ear cress).